A 325-amino-acid polypeptide reads, in one-letter code: ADP-L-glycero-D-manno-heptose-6-epimerase (325 aa).

NADP(+) is bound by residues 10–11, 31–32, lysine 38, and 75–79; these read FI, DD, and EGACS. Catalysis depends on tyrosine 139, which acts as the Proton acceptor. Lysine 143 is a binding site for NADP(+). Asparagine 167 contacts substrate. The NADP(+) site is built by valine 168 and lysine 176. The Proton acceptor role is filled by lysine 176. Substrate is bound by residues serine 178, histidine 185, 199-202, arginine 212, and tyrosine 285; that span reads FEGS.

The protein belongs to the NAD(P)-dependent epimerase/dehydratase family. HldD subfamily. In terms of assembly, homopentamer. It depends on NADP(+) as a cofactor.

It carries out the reaction ADP-D-glycero-beta-D-manno-heptose = ADP-L-glycero-beta-D-manno-heptose. Its pathway is nucleotide-sugar biosynthesis; ADP-L-glycero-beta-D-manno-heptose biosynthesis; ADP-L-glycero-beta-D-manno-heptose from D-glycero-beta-D-manno-heptose 7-phosphate: step 4/4. Functionally, catalyzes the interconversion between ADP-D-glycero-beta-D-manno-heptose and ADP-L-glycero-beta-D-manno-heptose via an epimerization at carbon 6 of the heptose. This is ADP-L-glycero-D-manno-heptose-6-epimerase from Azoarcus sp. (strain BH72).